The primary structure comprises 275 residues: tRNA pseudouridine synthase A (275 aa).

The active-site Nucleophile is aspartate 56. Tyrosine 109 is a binding site for substrate.

Belongs to the tRNA pseudouridine synthase TruA family.

The catalysed reaction is uridine(38/39/40) in tRNA = pseudouridine(38/39/40) in tRNA. Formation of pseudouridine at positions 38, 39 and 40 in the anticodon stem and loop of transfer RNAs. The chain is tRNA pseudouridine synthase A from Methanothermobacter thermautotrophicus (strain ATCC 29096 / DSM 1053 / JCM 10044 / NBRC 100330 / Delta H) (Methanobacterium thermoautotrophicum).